Reading from the N-terminus, the 251-residue chain is Uroporphyrinogen-III synthase (251 aa).

The segment at 231-251 (PAPNPESLASSIVAFDEENSS) is disordered.

Belongs to the uroporphyrinogen-III synthase family.

The catalysed reaction is hydroxymethylbilane = uroporphyrinogen III + H2O. Its pathway is porphyrin-containing compound metabolism; protoporphyrin-IX biosynthesis; coproporphyrinogen-III from 5-aminolevulinate: step 3/4. Catalyzes cyclization of the linear tetrapyrrole, hydroxymethylbilane, to the macrocyclic uroporphyrinogen III. The polypeptide is Uroporphyrinogen-III synthase (ups1) (Schizosaccharomyces pombe (strain 972 / ATCC 24843) (Fission yeast)).